Consider the following 206-residue polypeptide: Dephospho-CoA kinase (206 aa).

The DPCK domain maps to 4 to 200; that stretch reads IVALTGGIGS…AHYLQLASQF (197 aa). 12-17 contributes to the ATP binding site; it reads GSGKST.

This sequence belongs to the CoaE family.

The protein localises to the cytoplasm. It carries out the reaction 3'-dephospho-CoA + ATP = ADP + CoA + H(+). It participates in cofactor biosynthesis; coenzyme A biosynthesis; CoA from (R)-pantothenate: step 5/5. Functionally, catalyzes the phosphorylation of the 3'-hydroxyl group of dephosphocoenzyme A to form coenzyme A. The polypeptide is Dephospho-CoA kinase (Shigella flexneri).